A 180-amino-acid polypeptide reads, in one-letter code: MASSVLSSAAVATRSNVAQANMVAPFTGLKSAASFPVSRKQNLDITSIASNGGRVQCMQVWPPINKKKYETLSYLPDLSQEQLLSEIEYLLKSGWVPCLEFETERGFVYREHHHSPGYYDGRYWTMWKLPMFGCTDATQVLAEVEEAKKAYPQAWVRIIGFDNVRQVQCISFIAYKPEGY.

The transit peptide at 1 to 56 (MASSVLSSAAVATRSNVAQANMVAPFTGLKSAASFPVSRKQNLDITSIASNGGRVQ) directs the protein to the chloroplast.

Belongs to the RuBisCO small chain family. In terms of assembly, heterohexadecamer of 8 large and 8 small subunits.

It localises to the plastid. It is found in the chloroplast. Functionally, ruBisCO catalyzes two reactions: the carboxylation of D-ribulose 1,5-bisphosphate, the primary event in carbon dioxide fixation, as well as the oxidative fragmentation of the pentose substrate. Both reactions occur simultaneously and in competition at the same active site. Although the small subunit is not catalytic it is essential for maximal activity. This Nicotiana plumbaginifolia (Leadwort-leaved tobacco) protein is Ribulose bisphosphate carboxylase small subunit, chloroplastic.